A 900-amino-acid chain; its full sequence is Alanine--tRNA ligase (900 aa).

4 residues coordinate Zn(2+): histidine 604, histidine 608, cysteine 708, and histidine 712.

It belongs to the class-II aminoacyl-tRNA synthetase family. The cofactor is Zn(2+).

It localises to the cytoplasm. It catalyses the reaction tRNA(Ala) + L-alanine + ATP = L-alanyl-tRNA(Ala) + AMP + diphosphate. Catalyzes the attachment of alanine to tRNA(Ala) in a two-step reaction: alanine is first activated by ATP to form Ala-AMP and then transferred to the acceptor end of tRNA(Ala). Also edits incorrectly charged Ser-tRNA(Ala) and Gly-tRNA(Ala) via its editing domain. In Saccharolobus islandicus (strain M.16.27) (Sulfolobus islandicus), this protein is Alanine--tRNA ligase.